We begin with the raw amino-acid sequence, 875 residues long: Alanine--tRNA ligase (875 aa).

4 residues coordinate Zn(2+): His-561, His-565, Cys-663, and His-667.

This sequence belongs to the class-II aminoacyl-tRNA synthetase family. Zn(2+) serves as cofactor.

Its subcellular location is the cytoplasm. It catalyses the reaction tRNA(Ala) + L-alanine + ATP = L-alanyl-tRNA(Ala) + AMP + diphosphate. Its function is as follows. Catalyzes the attachment of alanine to tRNA(Ala) in a two-step reaction: alanine is first activated by ATP to form Ala-AMP and then transferred to the acceptor end of tRNA(Ala). Also edits incorrectly charged Ser-tRNA(Ala) and Gly-tRNA(Ala) via its editing domain. This is Alanine--tRNA ligase from Chlamydia trachomatis serovar L2 (strain ATCC VR-902B / DSM 19102 / 434/Bu).